An 83-amino-acid chain; its full sequence is uncharacterized protein (83 aa).

Transmembrane regions (helical) follow at residues 4 to 24, 32 to 52, and 54 to 74; these read AILS…GVLM, IGNI…LKAF, and YYDL…IIIG.

It localises to the cell membrane. This is an uncharacterized protein from Methanocaldococcus jannaschii (strain ATCC 43067 / DSM 2661 / JAL-1 / JCM 10045 / NBRC 100440) (Methanococcus jannaschii).